The following is a 669-amino-acid chain: Glutamate--cysteine ligase (669 aa).

It belongs to the glutamate--cysteine ligase type 3 family. As to quaternary structure, heterodimer of a catalytic heavy chain and a regulatory light chain.

It carries out the reaction L-cysteine + L-glutamate + ATP = gamma-L-glutamyl-L-cysteine + ADP + phosphate + H(+). It functions in the pathway sulfur metabolism; glutathione biosynthesis; glutathione from L-cysteine and L-glutamate: step 1/2. Catalyzes the ATP-dependent ligation of L-glutamate and L-cysteine and participates in the first and rate-limiting step in glutathione biosynthesis. The protein is Glutamate--cysteine ligase (gcs1) of Schizosaccharomyces pombe (strain 972 / ATCC 24843) (Fission yeast).